We begin with the raw amino-acid sequence, 131 residues long: Holin-like protein CidA (131 aa).

The next 4 helical transmembrane spans lie at 4 to 24, 30 to 50, 65 to 85, and 88 to 108; these read VQLI…TYIG, IFHL…LLLQ, FLLK…MDVA, and ITLN…IVAL.

It belongs to the CidA/LrgA family. CidA subfamily.

It localises to the cell membrane. Its function is as follows. Increases the activity of extracellular murein hydrolases possibly by mediating their export via hole formation. Inhibited by the antiholin-like proteins LrgAB. In an unstressed cell, the LrgAB products probably inhibit the function of the CidAB proteins. When a cell is stressed by the addition of antibiotics or by other factors in the environment, the CidAB proteins possibly oligomerize within the bacterial cell membrane, creating lesions that disrupt the proton motive force, which in turn results in loss of cell viability. These lesions are also hypothesized to regulate the subsequent cell lysis by either allowing the murein hydrolases access to the cell wall substrate and/or regulating their activity by a possible change in the cell wall pH that results from loss of membrane potential. The protein is Holin-like protein CidA of Staphylococcus aureus (strain Mu3 / ATCC 700698).